The sequence spans 1025 residues: MKFFALFIYRPVATILISLAITLCGILGFRLLPVAPLPQVDFPVIMVSASLPGASPETMASSVATPLERSLGRIAGVNEMTSSSSLGSTRIILEFNFDRDINGAARDVQAAINAAQSLLPSGMPSRPTYRKANPSDAPIMILTLTSDTYSQGELYDFASTQLAQTIAQIDGVGDVDVGGSSLPAVRVDLNPQALFNQGVSLDAVRTAISDANVRKPQGALEDSAHRWQVQTNDELKTAADYQPLIVHYQNGAAVRLGDVATVSDSVQDVRNAGMTNAKPAILLMIRKLPEANIIQTVDSIRARLPELQQTIPAAIDLQIAQDRSPTIRASLEEVEQTLVISVALVILVVFLFLRSGRATLIPAVAVPVSLIGTFAAMYLCGFSLNNLSLMALTIATGFVVDDAIVVLENISRHLEAGMKPLQAALQGSREVGFTVLSMSLSLVAVFLPLLLMGGLPGRLLREFAVTLSVAIGISLAVSLTLTPMMCGWLLKSGKPHQPTRNRGFGRLLVAVQGGYGKSLKWVLRHSRLTGLVVLGTIALSVWLYISIPKTFFPEQDTGVLMGGIQADQSISFQAMRGKLQDFMKIIREDPAVDNVTGFTGGSRVNSGMMFITLKPRDQRHETAQQVIDRLRKKLANEPGANLFLMAVQDIRVGGRQSNASYQYTLLSDDLSALREWEPKIRKALAALPELADVNSDQQDNGAEMDLVYDRDTMSRLGISVQDANNLLNNAFGQRQISTIYQPLNQYKVVMEVDPAYTQDVSALDKMFVINSEGKPIPLAYFAKWQPANAPLSVNHQGLSAASTISFNLPTGRSLSEASDAINRTMTQLGVPSSVRGSFAGTAQVFQQTMNAQVILILAAIATVYIVLGMLYESYVHPLTILSTLPSAGVGALLALEIFDAPFSLIALIGIMLLIGIVKKNAIMMVDFALEAQRTGNLAPEEAIFQACLLRFRPIMMTTLAALFGALPLVLSGGDGSELRQPLGITIVGGLVMSQLLTLYTTPVVYLFFDRLRLRFSRHSSQPVSE.

A run of 12 helical transmembrane segments spans residues isoleucine 15–alanine 35, glutamate 333–leucine 353, leucine 360–cysteine 380, leucine 387–leucine 407, valine 431–leucine 451, valine 469–leucine 489, leucine 528–proline 548, alanine 851–tyrosine 871, valine 875–leucine 895, isoleucine 897–valine 917, proline 953–glycine 973, and isoleucine 984–valine 1004.

This sequence belongs to the resistance-nodulation-cell division (RND) (TC 2.A.6) family. MdtC subfamily. Part of a tripartite efflux system composed of MdtA, MdtB and MdtC. MdtC forms a heteromultimer with MdtB.

The protein resides in the cell inner membrane. The protein is Multidrug resistance protein MdtC of Klebsiella pneumoniae (strain 342).